A 428-amino-acid chain; its full sequence is Enolase (428 aa).

Gln163 contacts (2R)-2-phosphoglycerate. Glu205 (proton donor) is an active-site residue. Asp242, Glu285, and Asp311 together coordinate Mg(2+). 4 residues coordinate (2R)-2-phosphoglycerate: Lys336, Arg365, Ser366, and Lys387. Lys336 functions as the Proton acceptor in the catalytic mechanism.

This sequence belongs to the enolase family. The cofactor is Mg(2+).

The protein localises to the cytoplasm. Its subcellular location is the secreted. It localises to the cell surface. It carries out the reaction (2R)-2-phosphoglycerate = phosphoenolpyruvate + H2O. The protein operates within carbohydrate degradation; glycolysis; pyruvate from D-glyceraldehyde 3-phosphate: step 4/5. Its function is as follows. Catalyzes the reversible conversion of 2-phosphoglycerate (2-PG) into phosphoenolpyruvate (PEP). It is essential for the degradation of carbohydrates via glycolysis. The protein is Enolase of Desulfatibacillum aliphaticivorans.